The following is a 708-amino-acid chain: F-box protein MAX2 homolog A (708 aa).

In terms of domain architecture, F-box spans 2–49 (ATQLNDLPDVILSNIIAAVTDVRSRNSTSFVCRKWLVLERSTRVSLTL).

As to quaternary structure, part of a putative SCF (SKP1/Cullin/F-box) ubiquitin ligase complex. Interacts with DAD2. Interacts with KAI2IA in the presence of (-)-germacrene D. Mainly expressed in fully expanded leaves, lateral roots, axillary and shoot apex, and, to a lower extent, in internodes and nodes.

Its subcellular location is the nucleus. Its function is as follows. Component of SCF(ASK-cullin-F-box) E3 ubiquitin ligase complexes, which may mediate the ubiquitination and subsequent proteasomal degradation of target proteins. Is necessary for responses to strigolactones and may be involved in the ubiquitin-mediated degradation of specific proteins that activate axillary growth. Targets probably SMAX1A to degradation upon the formation of an E3 SCF ubiquitin ligase complex (ASK-cullin-F-box) containing MAX2A and KAI2IA in response to (-)-germacrene D in the stigma. The protein is F-box protein MAX2 homolog A of Petunia hybrida (Petunia).